Here is a 355-residue protein sequence, read N- to C-terminus: UDP-N-acetylglucosamine--N-acetylmuramyl-(pentapeptide) pyrophosphoryl-undecaprenol N-acetylglucosamine transferase (355 aa).

Residues 15-17, N127, R163, S191, I244, 263-268, and Q288 contribute to the UDP-N-acetyl-alpha-D-glucosamine site; these read TGG and ALTVSE.

Belongs to the glycosyltransferase 28 family. MurG subfamily.

It is found in the cell inner membrane. It carries out the reaction di-trans,octa-cis-undecaprenyl diphospho-N-acetyl-alpha-D-muramoyl-L-alanyl-D-glutamyl-meso-2,6-diaminopimeloyl-D-alanyl-D-alanine + UDP-N-acetyl-alpha-D-glucosamine = di-trans,octa-cis-undecaprenyl diphospho-[N-acetyl-alpha-D-glucosaminyl-(1-&gt;4)]-N-acetyl-alpha-D-muramoyl-L-alanyl-D-glutamyl-meso-2,6-diaminopimeloyl-D-alanyl-D-alanine + UDP + H(+). The protein operates within cell wall biogenesis; peptidoglycan biosynthesis. In terms of biological role, cell wall formation. Catalyzes the transfer of a GlcNAc subunit on undecaprenyl-pyrophosphoryl-MurNAc-pentapeptide (lipid intermediate I) to form undecaprenyl-pyrophosphoryl-MurNAc-(pentapeptide)GlcNAc (lipid intermediate II). This Escherichia coli O157:H7 protein is UDP-N-acetylglucosamine--N-acetylmuramyl-(pentapeptide) pyrophosphoryl-undecaprenol N-acetylglucosamine transferase.